The sequence spans 563 residues: MDVGELLSYQPNRGTKRPRDDEEEEQKMRRKQTGTRERGRYREEEMTVVEEADDDKKRLLQIIDRDGEEEEEEEEPLDESSVKKMILTFEKRSYKNQELRIKFPDNPEKFMESELDLNDIIQEMHVVATMPDLYHLLVELNAVQSLLGLLGHDNTDVSIAVVDLLQELTDIDTLHESEEGAEVLIDALVDGQVVALLVQNLERLDESVKEEADGVHNTLAIVENMAEFRPEMCTEGAQQGLLQWLLKRLKAKMPFDANKLYCSEVLAILLQDNDENRELLGELDGIDVLLQQLSVFKRHNPSTAEEQEMMENLFDSLCSCLMLSSNRERFLKGEGLQLMNLMLREKKISRSSALKVLDHAMIGPEGTDNCHKFVDILGLRTIFPLFMKSPRKIKKVGTTEKEHEEHVCSILASLLRNLRGQQRTRLLNKFTENDSEKVDRLMELHFKYLGAMQVADKKIEGEKHDMVRRGEIIDNDTEEEFYLRRLDAGLFVLQHICYIMAEICNANVPQIRQRVHQILNMRGSSIKIVRHIIKEYAENIGDGRSPEFRENEQKRILGLLENF.

N-acetylmethionine is present on Met1. A disordered region spans residues 1–49; the sequence is MDVGELLSYQPNRGTKRPRDDEEEEQKMRRKQTGTRERGRYREEEMTVV. Positions 16–33 match the Nuclear localization signal motif; it reads KRPRDDEEEEQKMRRKQT. Residues 34 to 45 are compositionally biased toward basic and acidic residues; that stretch reads GTRERGRYREEE. 2 HEAT repeats span residues 79–129 and 134–176; these read ESSV…VVAT and YHLL…TLHE. At Lys91 the chain carries N6-acetyllysine. A Nuclear export signal (NES) motif is present at residues 130–140; sequence MPDLYHLLVEL. ARM repeat units lie at residues 178 to 228, 229 to 273, 274 to 323, 325 to 363, and 364 to 417; these read EEGA…MAEF, RPEM…LQDN, DENR…CLML, SNRERFLKGEGLQLMNLMLREKKISRSSALKVLDHAMIG, and PEGT…LLRN. A Phosphoserine modification is found at Ser389. Residues 476-540 are a coiled coil; it reads DTEEEFYLRR…HIIKEYAENI (65 aa). Ser545 is subject to Phosphoserine.

In terms of assembly, component of the PRP19-CDC5L splicing complex composed of a core complex comprising a homotetramer of PRPF19, CDC5L, PLRG1 and BCAS2, and at least three less stably associated proteins CTNNBL1, CWC15 and HSPA8. Interacts directly with CWC15 and CDC5L in the complex. Interacts with AICDA; the interaction is important for the antibody diversification activity of AICDA. Interacts with PRPF31 (via its NLS). Interacts (via its N-terminal NLS) with KPNA1 and KPNA2. As to expression, widely expressed with highest levels in skeletal muscle, placenta, heart, spleen, testis and thyroid.

Its subcellular location is the nucleus. It is found in the cytoplasm. Functionally, component of the PRP19-CDC5L complex that forms an integral part of the spliceosome and is required for activating pre-mRNA splicing. Participates in AID/AICDA-mediated somatic hypermutation (SHM) and class-switch recombination (CSR), 2 processes resulting in the production of high-affinity, mutated isotype-switched antibodies. This Homo sapiens (Human) protein is Beta-catenin-like protein 1 (CTNNBL1).